A 179-amino-acid chain; its full sequence is Replication restart protein DnaT (179 aa).

Residues G156–G179 form a disordered region.

This sequence belongs to the DnaT family. As to quaternary structure, homooligomerizes. Interacts with PriB. Component of the replication restart primosome. Primosome assembly occurs via a 'hand-off' mechanism. PriA binds to replication forks, subsequently PriB then DnaT bind; DnaT then displaces ssDNA to generate the helicase loading substrate.

Functionally, involved in the restart of stalled replication forks, which reloads the replicative helicase on sites other than the origin of replication. Can function in multiple replication restart pathways. Displaces ssDNA from a PriB-ssDNA complex. Probably forms a spiral filament on ssDNA. The protein is Replication restart protein DnaT of Escherichia coli O7:K1 (strain IAI39 / ExPEC).